A 232-amino-acid polypeptide reads, in one-letter code: MSRFTFKQFHINQNSCAMKVGTDGILLGAWADVKHCKNILDMGCGTGLLALMLAQRTEENCQIQAVELDPIAAKQAQENINNSVWKNRIQLTQVDIQHFLQTTEQTFDLIVANPPYFEQGIACKNEERELARYTKQSHLNWLEWAATRLSENGRISFVLPYEAGKTLTKSTALFCIKQTNVITKIGKTPQRMLLTFAKQPEVLMQDQLVIYDADNQYTEAFIELTKDFYLKF.

The protein belongs to the methyltransferase superfamily. tRNA (adenine-N(6)-)-methyltransferase family.

It is found in the cytoplasm. The catalysed reaction is adenosine(37) in tRNA1(Val) + S-adenosyl-L-methionine = N(6)-methyladenosine(37) in tRNA1(Val) + S-adenosyl-L-homocysteine + H(+). Specifically methylates the adenine in position 37 of tRNA(1)(Val) (anticodon cmo5UAC). This is tRNA1(Val) (adenine(37)-N6)-methyltransferase from Haemophilus influenzae (strain ATCC 51907 / DSM 11121 / KW20 / Rd).